The chain runs to 1165 residues: Tectonin beta-propeller repeat-containing protein 1 (1165 aa).

TECPR repeat units follow at residues 209 to 240 (LSVWAVSLQGKVWYREDVSHSNPEGSSWSLLD), 254 to 285 (DLLWATLWEGQALVREGINRSNPKGSSWSIVE), 301 to 332 (SVVWAVTKDWKVWFRRGVNSHNPCGTSWIEMV), and 344 to 376 (DQVWGIGCEDRAVYFRQGVTPSELSGKTWKAII). Phosphoserine occurs at positions 386, 388, 391, 412, and 417. The disordered stretch occupies residues 404–486 (RGSGESAPSD…GPAPTPAELP (83 aa)). The PH domain occupies 611-717 (KTGALQWWCD…WLALLSLSCC (107 aa)). The stretch at 729–756 (QAIWSITCKGDIFVSEPSPDLEAHEHPL) is one TECPR 5 repeat. Residues serine 938 and serine 949 each carry the phosphoserine modification. 4 TECPR repeats span residues 953–984 (IALWAVSDKGDVLCRLGVSELNPAGSSWLHVG), 998–1029 (YQVWAVARDGSAFYRGSVYPSQPAGDCWYHIP), 1044–1075 (TSVYALDENGNLWYRQGITPSYPQGSSWEHVS), and 1087–1127 (DQVW…DYGI). Residues 1140–1165 (ATRAPRSSSQEQEPSAPPEAHGPVCC) are disordered. Residues 1143 to 1153 (APRSSSQEQEP) are compositionally biased toward low complexity.

The protein belongs to the TECPR1 family. In terms of assembly, interacts with ATG5; the interaction is direct. Interacts with WIPI2. Interacts with the ATG5-ATG12 conjugate, the interaction is however mutually exclusive with ATG16, since it does not interact with ATG12-ATG5-ATG16 complex.

Its subcellular location is the cytoplasmic vesicle. It is found in the autophagosome membrane. It localises to the lysosome membrane. Tethering factor involved in autophagy. Involved in autophagosome maturation by promoting the autophagosome fusion with lysosomes: acts by associating with both the ATG5-ATG12 conjugate and phosphatidylinositol-3-phosphate (PtdIns(3)P) present at the surface of autophagosomes. Also involved in selective autophagy against bacterial pathogens, by being required for phagophore/preautophagosomal structure biogenesis and maturation. This Homo sapiens (Human) protein is Tectonin beta-propeller repeat-containing protein 1 (TECPR1).